The primary structure comprises 144 residues: Ribosome association toxin RatA (144 aa).

This sequence belongs to the ribosome association toxin RatA family.

Its function is as follows. Toxic component of a type II toxin-antitoxin (TA) system. Binds to 50S ribosomal subunits, preventing them from associating with 30S subunits to form 70S ribosomes. Its antitoxin is unknown. The chain is Ribosome association toxin RatA (ratA) from Pseudomonas aeruginosa (strain ATCC 15692 / DSM 22644 / CIP 104116 / JCM 14847 / LMG 12228 / 1C / PRS 101 / PAO1).